The sequence spans 366 residues: NADH-quinone oxidoreductase subunit D (366 aa).

It belongs to the complex I 49 kDa subunit family. As to quaternary structure, NDH-1 is composed of 14 different subunits. Subunits NuoB, C, D, E, F, and G constitute the peripheral sector of the complex.

It is found in the cell membrane. It catalyses the reaction a quinone + NADH + 5 H(+)(in) = a quinol + NAD(+) + 4 H(+)(out). Functionally, NDH-1 shuttles electrons from NADH, via FMN and iron-sulfur (Fe-S) centers, to quinones in the respiratory chain. The immediate electron acceptor for the enzyme in this species is believed to be a menaquinone. Couples the redox reaction to proton translocation (for every two electrons transferred, four hydrogen ions are translocated across the cytoplasmic membrane), and thus conserves the redox energy in a proton gradient. This chain is NADH-quinone oxidoreductase subunit D, found in Bacillus cytotoxicus (strain DSM 22905 / CIP 110041 / 391-98 / NVH 391-98).